Reading from the N-terminus, the 218-residue chain is Elongation factor Ts (218 aa).

Residues 82–85 are involved in Mg(2+) ion dislocation from EF-Tu; that stretch reads TDFV.

It belongs to the EF-Ts family.

The protein resides in the cytoplasm. Its function is as follows. Associates with the EF-Tu.GDP complex and induces the exchange of GDP to GTP. It remains bound to the aminoacyl-tRNA.EF-Tu.GTP complex up to the GTP hydrolysis stage on the ribosome. This Prochlorococcus marinus (strain MIT 9211) protein is Elongation factor Ts.